Here is a 185-residue protein sequence, read N- to C-terminus: A-type ATP synthase subunit E (185 aa).

This sequence belongs to the V-ATPase E subunit family. In terms of assembly, has multiple subunits with at least A(3), B(3), C, D, E, F, H, I and proteolipid K(x).

Its subcellular location is the cell membrane. Functionally, component of the A-type ATP synthase that produces ATP from ADP in the presence of a proton gradient across the membrane. The protein is A-type ATP synthase subunit E of Thermoplasma acidophilum (strain ATCC 25905 / DSM 1728 / JCM 9062 / NBRC 15155 / AMRC-C165).